A 180-amino-acid polypeptide reads, in one-letter code: MLIAITGTPGVGKTTIAKLLAEKLGYEYVNLRDFALEKGCGREVDGEVEVEIDELAYFVEKELKDRNVVLDGHLSHLMPVDLVVVLRAHPRIIGERLRERGYSKEKIGENVEAELVDAILIEAIDEHENVIEVDTTNKTPEEIVEEIIGLIKSGVKRRVGIVDWSEVYDEIIPYLRLGGE.

Residues G10, G12, K13, T14, and T15 each coordinate ATP. The interval N30–V50 is NMP. The LID stretch occupies residues E99–E109. Residues R100 and K138 each contribute to the ATP site.

This sequence belongs to the adenylate kinase family. AK6 subfamily. As to quaternary structure, interacts with uS11. Not a structural component of 40S pre-ribosomes, but transiently interacts with them by binding to uS11.

It catalyses the reaction AMP + ATP = 2 ADP. It carries out the reaction ATP + H2O = ADP + phosphate + H(+). In terms of biological role, broad-specificity nucleoside monophosphate (NMP) kinase that catalyzes the reversible transfer of the terminal phosphate group between nucleoside triphosphates and monophosphates. Also has ATPase activity. Involved in the late maturation steps of the 30S ribosomal particles, specifically 16S rRNA maturation. While NMP activity is not required for ribosome maturation, ATPase activity is. Associates transiently with small ribosomal subunit protein uS11. ATP hydrolysis breaks the interaction with uS11. May temporarily remove uS11 from the ribosome to enable a conformational change of the ribosomal RNA that is needed for the final maturation step of the small ribosomal subunit. The polypeptide is Putative adenylate kinase (Pyrococcus abyssi (strain GE5 / Orsay)).